The primary structure comprises 147 residues: Nucleoside diphosphate kinase (147 aa).

ATP is bound by residues lysine 9, phenylalanine 57, arginine 85, threonine 91, arginine 102, and asparagine 112. Residue histidine 115 is the Pros-phosphohistidine intermediate of the active site.

Belongs to the NDK family. The cofactor is Mg(2+).

It localises to the cytoplasm. The enzyme catalyses a 2'-deoxyribonucleoside 5'-diphosphate + ATP = a 2'-deoxyribonucleoside 5'-triphosphate + ADP. It catalyses the reaction a ribonucleoside 5'-diphosphate + ATP = a ribonucleoside 5'-triphosphate + ADP. Its function is as follows. Major role in the synthesis of nucleoside triphosphates other than ATP. The ATP gamma phosphate is transferred to the NDP beta phosphate via a ping-pong mechanism, using a phosphorylated active-site intermediate. The protein is Nucleoside diphosphate kinase of Ignicoccus hospitalis (strain KIN4/I / DSM 18386 / JCM 14125).